The primary structure comprises 154 residues: Putative protein heh-1 (154 aa).

The signal sequence occupies residues 1-15 (MKTVIFLALLGLAAA). 2 cysteine pairs are disulfide-bonded: C39–C50 and C97–C103.

Belongs to the NPC2 family.

The protein localises to the secreted. The polypeptide is Putative protein heh-1 (heh-1) (Caenorhabditis elegans).